The primary structure comprises 100 residues: Urease subunit gamma (100 aa).

This sequence belongs to the urease gamma subunit family. Heterotrimer of UreA (gamma), UreB (beta) and UreC (alpha) subunits. Three heterotrimers associate to form the active enzyme. The apoenzyme interacts with an accessory complex composed of UreD, UreF and UreG, which is required for the assembly of the nickel containing metallocenter of UreC. The UreE protein may also play a direct role as a metallochaperone in nickel transfer to the urease apoprotein.

The protein localises to the cytoplasm. The enzyme catalyses urea + 2 H2O + H(+) = hydrogencarbonate + 2 NH4(+). Its pathway is nitrogen metabolism; urea degradation; CO(2) and NH(3) from urea (urease route): step 1/1. With respect to regulation, the apoenzyme can be activated in vitro in the presence of nickel ions and carbon dioxide, which promotes carbamylation of 'Lys-217' of the UreC (alpha) subunit. The polypeptide is Urease subunit gamma (Klebsiella aerogenes (Enterobacter aerogenes)).